The sequence spans 109 residues: UPF0482 protein ESA_01750 (109 aa).

Positions 1-24 (MNKFLRHSLLLALLTGALSGVANA) are cleaved as a signal peptide. Residues 38-55 (RTRQDAAMDKEQWNDTRS) are compositionally biased toward basic and acidic residues. Residues 38–63 (RTRQDAAMDKEQWNDTRSLRQKVNKR) are disordered.

It belongs to the UPF0482 family.

This Cronobacter sakazakii (strain ATCC BAA-894) (Enterobacter sakazakii) protein is UPF0482 protein ESA_01750.